A 183-amino-acid polypeptide reads, in one-letter code: Adenine phosphoribosyltransferase (183 aa).

The protein belongs to the purine/pyrimidine phosphoribosyltransferase family. In terms of assembly, homodimer.

The protein localises to the cytoplasm. The enzyme catalyses AMP + diphosphate = 5-phospho-alpha-D-ribose 1-diphosphate + adenine. It functions in the pathway purine metabolism; AMP biosynthesis via salvage pathway; AMP from adenine: step 1/1. Functionally, catalyzes a salvage reaction resulting in the formation of AMP, that is energically less costly than de novo synthesis. In Escherichia coli O157:H7, this protein is Adenine phosphoribosyltransferase.